A 724-amino-acid chain; its full sequence is Catalase-peroxidase (724 aa).

Positions 96–225 form a cross-link, tryptophyl-tyrosyl-methioninium (Trp-Tyr) (with M-251); the sequence is WHAAGTYRVA…LAAVMMGLIY (130 aa). Residue H97 is the Proton acceptor of the active site. Positions 225–251 form a cross-link, tryptophyl-tyrosyl-methioninium (Tyr-Met) (with W-96); that stretch reads YVNPEGVDGNPDPLRTAEDVRITFERM. H266 contributes to the heme b binding site.

It belongs to the peroxidase family. Peroxidase/catalase subfamily. Homodimer or homotetramer. Heme b is required as a cofactor. Post-translationally, formation of the three residue Trp-Tyr-Met cross-link is important for the catalase, but not the peroxidase activity of the enzyme.

The catalysed reaction is H2O2 + AH2 = A + 2 H2O. It catalyses the reaction 2 H2O2 = O2 + 2 H2O. Functionally, bifunctional enzyme with both catalase and broad-spectrum peroxidase activity. The chain is Catalase-peroxidase from Halorhodospira halophila (strain DSM 244 / SL1) (Ectothiorhodospira halophila (strain DSM 244 / SL1)).